A 1383-amino-acid chain; its full sequence is Putative autophagy-related protein 11 (1383 aa).

Coiled coils occupy residues 16 to 49 (DKNN…YELN) and 117 to 324 (NLFL…QNKE). Basic and acidic residues-rich tracts occupy residues 1151-1224 (EEEK…EDRK) and 1233-1249 (HSSD…KTKE). Residues 1151 to 1249 (EEEKKKNEEE…KYNKKEKTKE (99 aa)) are disordered.

The protein belongs to the ATG11 family.

Its function is as follows. Involved in cytoplasm to vacuole transport (Cvt), pexophagy, mitophagy and nucleophagy. Works as scaffold proteins that recruit ATG proteins to the pre-autophagosome (PAS), the site of vesicle/autophagosome formation. In Plasmodium falciparum (isolate 3D7), this protein is Putative autophagy-related protein 11.